Consider the following 321-residue polypeptide: Probable protein phosphatase 2C 44 (321 aa).

2 disordered regions span residues methionine 1–lysine 36 and asparagine 51–threonine 70. The segment covering serine 9–alanine 31 has biased composition (low complexity). The span at asparagine 51–valine 69 shows a compositional bias: polar residues. The PPM-type phosphatase domain maps to threonine 70–phenylalanine 319. Mn(2+) is bound by residues aspartate 107, glycine 108, aspartate 271, and aspartate 310.

The protein belongs to the PP2C family. Mg(2+) is required as a cofactor. The cofactor is Mn(2+).

It carries out the reaction O-phospho-L-seryl-[protein] + H2O = L-seryl-[protein] + phosphate. The enzyme catalyses O-phospho-L-threonyl-[protein] + H2O = L-threonyl-[protein] + phosphate. In Oryza sativa subsp. japonica (Rice), this protein is Probable protein phosphatase 2C 44.